We begin with the raw amino-acid sequence, 412 residues long: Lipid droplet organization protein LDO45 (412 aa).

The Cytoplasmic portion of the chain corresponds to 1–170 (MAARNRRKNN…TVEKLNALQN (170 aa)). A helical transmembrane segment spans residues 171–191 (SLYEVFWIIFIYLNYWFPNVG). Residues 192–247 (DYVSNTFGQQDSIIIRISLSKSHFRALREKSSQKVQQAVKNIYFCFQEKPYLTAFK) are Lumenal-facing. The helical transmembrane segment at 248-268 (VSFAIGLVIPCSLLFLIMVST) threads the bilayer. The Cytoplasmic segment spans residues 269–271 (ATF). A helical membrane pass occupies residues 272-292 (FFFVYLTLFVVIGFFSSLFII). P293 is a topological domain (lumenal). A helical transmembrane segment spans residues 294–314 (LLGISFVFAIGVVSFGFCSNM). At 315–412 (SFKMAQLIYV…NKAGNKFQLS (98 aa)) the chain is on the cytoplasmic side. The tract at residues 347-374 (QEPQEPLSTLRPVSNPTIPSPLRQTARP) is disordered. Over residues 357-373 (RPVSNPTIPSPLRQTAR) the composition is skewed to polar residues.

In terms of assembly, interacts specifically with the seipin complex FLD1-LDB16. Only a fraction appears to associate with the seipin core components, suggesting that it may be an ancillary subunit of the complex.

Its subcellular location is the endoplasmic reticulum membrane. The protein localises to the lipid droplet. Functionally, involved in lipid droplet (LD) organization. Modulates triglyceride (TAG) storage by reducing DGA1 LD localization. Promotes LD targeting of some proteins, including PDR16. This is Lipid droplet organization protein LDO45 from Saccharomyces cerevisiae (strain ATCC 204508 / S288c) (Baker's yeast).